Reading from the N-terminus, the 448-residue chain is Phosphoglucosamine mutase (448 aa).

The active-site Phosphoserine intermediate is the Ser100. Residues Ser100, Asp240, Asp242, and Asp244 each coordinate Mg(2+). At Ser100 the chain carries Phosphoserine.

This sequence belongs to the phosphohexose mutase family. The cofactor is Mg(2+). Activated by phosphorylation.

The enzyme catalyses alpha-D-glucosamine 1-phosphate = D-glucosamine 6-phosphate. Catalyzes the conversion of glucosamine-6-phosphate to glucosamine-1-phosphate. This is Phosphoglucosamine mutase from Bacillus mycoides (strain KBAB4) (Bacillus weihenstephanensis).